Consider the following 145-residue polypeptide: Large ribosomal subunit protein uL15 (145 aa).

The disordered stretch occupies residues Met-1 to Gly-43. The segment covering Arg-21–Cys-31 has biased composition (gly residues).

Belongs to the universal ribosomal protein uL15 family. In terms of assembly, part of the 50S ribosomal subunit.

Functionally, binds to the 23S rRNA. The sequence is that of Large ribosomal subunit protein uL15 from Aromatoleum aromaticum (strain DSM 19018 / LMG 30748 / EbN1) (Azoarcus sp. (strain EbN1)).